The primary structure comprises 65 residues: Light-harvesting protein B-800-850 alpha chain C (65 aa).

Topologically, residues 1–11 are cytoplasmic; sequence MNQGRIWTVVS. The chain crosses the membrane as a helical span at residues 12–35; the sequence is PTVGLPLLLGSVAAIAFAVHFAVL. Residue His31 participates in a bacteriochlorophyll binding. Topologically, residues 36-65 are periplasmic; the sequence is ENTSWVAAFMNGKSVAAAPAPAAPAAPAKK.

It belongs to the antenna complex alpha subunit family. In terms of assembly, the core complex is formed by different alpha and beta chains, binding bacteriochlorophyll molecules, and arranged most probably in tetrameric structures disposed around the reaction center. The non-pigmented gamma chains may constitute additional components.

The protein resides in the cell inner membrane. In terms of biological role, antenna complexes are light-harvesting systems, which transfer the excitation energy to the reaction centers. This is Light-harvesting protein B-800-850 alpha chain C (pucAC) from Rhodopseudomonas palustris.